Reading from the N-terminus, the 520-residue chain is Bifunctional dihydrofolate reductase-thymidylate synthase (520 aa).

A DHFR domain is found at Ala26–Pro229. Val30 lines the substrate pocket. Residues Ala32 and Gly38–Ser44 each bind NADP(+). Asp52 provides a ligand contact to substrate. NADP(+) is bound by residues Arg81–Thr83, Leu102–Lys105, and Gly157–Asp164. Substrate is bound by residues Tyr162 and Thr180. The thymidylate synthase stretch occupies residues Glu234–Val520. Arg254 contacts dUMP. The active site involves Cys400. Residues His401, Gln421 to Asp425, Asn433, and His463 to Tyr465 each bind dUMP.

This sequence in the N-terminal section; belongs to the dihydrofolate reductase family. In the C-terminal section; belongs to the thymidylate synthase family.

It carries out the reaction (6S)-5,6,7,8-tetrahydrofolate + NADP(+) = 7,8-dihydrofolate + NADPH + H(+). It catalyses the reaction dUMP + (6R)-5,10-methylene-5,6,7,8-tetrahydrofolate = 7,8-dihydrofolate + dTMP. The protein operates within cofactor biosynthesis; tetrahydrofolate biosynthesis; 5,6,7,8-tetrahydrofolate from 7,8-dihydrofolate: step 1/1. Its function is as follows. Bifunctional enzyme. Involved in de novo dTMP biosynthesis. Key enzyme in folate metabolism. Catalyzes an essential reaction for de novo glycine and purine synthesis, DNA precursor synthesis, and for the conversion of dUMP to dTMP. The chain is Bifunctional dihydrofolate reductase-thymidylate synthase from Leishmania amazonensis.